A 235-amino-acid polypeptide reads, in one-letter code: Large ribosomal subunit protein uL1 (235 aa).

Belongs to the universal ribosomal protein uL1 family. In terms of assembly, part of the 50S ribosomal subunit.

Binds directly to 23S rRNA. The L1 stalk is quite mobile in the ribosome, and is involved in E site tRNA release. In terms of biological role, protein L1 is also a translational repressor protein, it controls the translation of the L11 operon by binding to its mRNA. The chain is Large ribosomal subunit protein uL1 from Symbiobacterium thermophilum (strain DSM 24528 / JCM 14929 / IAM 14863 / T).